Here is a 119-residue protein sequence, read N- to C-terminus: Large ribosomal subunit protein bL20 (119 aa).

Belongs to the bacterial ribosomal protein bL20 family.

Binds directly to 23S ribosomal RNA and is necessary for the in vitro assembly process of the 50S ribosomal subunit. It is not involved in the protein synthesizing functions of that subunit. This chain is Large ribosomal subunit protein bL20, found in Shewanella woodyi (strain ATCC 51908 / MS32).